A 185-amino-acid polypeptide reads, in one-letter code: Sulfopyruvate decarboxylase subunit beta (185 aa).

The protein belongs to the TPP enzyme family. As to quaternary structure, heterododecamer composed of 6 subunits alpha and 6 subunits beta. The cofactor is thiamine diphosphate.

It carries out the reaction 3-sulfopyruvate + H(+) = sulfoacetaldehyde + CO2. Its pathway is cofactor biosynthesis; coenzyme M biosynthesis; sulfoacetaldehyde from phosphoenolpyruvate and sulfite: step 4/4. Involved in the biosynthesis of the coenzyme M (2-mercaptoethanesulfonic acid). Catalyzes the decarboxylation of sulfopyruvate to sulfoacetaldehyde. This Methanococcus maripaludis (strain DSM 14266 / JCM 13030 / NBRC 101832 / S2 / LL) protein is Sulfopyruvate decarboxylase subunit beta.